The chain runs to 101 residues: Small ribosomal subunit protein uS10 (101 aa).

It belongs to the universal ribosomal protein uS10 family. In terms of assembly, part of the 30S ribosomal subunit.

In terms of biological role, involved in the binding of tRNA to the ribosomes. This Mycoplasmopsis synoviae (strain 53) (Mycoplasma synoviae) protein is Small ribosomal subunit protein uS10.